Consider the following 283-residue polypeptide: V-set domain containing T-cell activation inhibitor 1 (283 aa).

Positions 1-24 are cleaved as a signal peptide; that stretch reads MASLGQIIFWSIINIIIILAGAIA. Ig-like V-type domains are found at residues 35-144 and 153-241; these read HFIT…ANLE and PEIN…IKVT. Intrachain disulfides connect C56–C130 and C168–C225. An N-linked (GlcNAc...) asparagine glycan is attached at N216. The GPI-anchor amidated glycine moiety is linked to residue G257. A propeptide spans 258–283 (removed in mature form); it reads PSPCVFSSAFVAGWALLSLSCCLMLR.

The protein belongs to the immunoglobulin superfamily. BTN/MOG family. N-glycosylated. As to expression, expressed on the surface of professional antigen-presenting cells (at protein level). Widely expressed, including in kidney, liver, lung, pancreas, placenta, prostate, spleen, testis and thymus.

It is found in the cell membrane. Functionally, negatively regulates T-cell-mediated immune response by inhibiting T-cell activation, proliferation, cytokine production and development of cytotoxicity. When expressed on the cell surface of tumor macrophages, plays an important role, together with regulatory T-cells (Treg), in the suppression of tumor-associated antigen-specific T-cell immunity. Involved in promoting epithelial cell transformation. The sequence is that of V-set domain containing T-cell activation inhibitor 1 from Mus musculus (Mouse).